Consider the following 469-residue polypeptide: GTPase Der (469 aa).

EngA-type G domains follow at residues 3–166 (PVIA…PEDE) and 177–350 (LRLA…ESAN). GTP-binding positions include 9–16 (GRPNVGKS), 56–60 (DTGGI), 118–121 (NKVD), 183–190 (GRPNVGKS), 230–234 (DTAGV), and 295–298 (NKWD). One can recognise a KH-like domain in the interval 351-435 (LKVSPAKLTQ…PVKIEFKTSE (85 aa)).

Belongs to the TRAFAC class TrmE-Era-EngA-EngB-Septin-like GTPase superfamily. EngA (Der) GTPase family. As to quaternary structure, associates with the 50S ribosomal subunit.

In terms of biological role, GTPase that plays an essential role in the late steps of ribosome biogenesis. The chain is GTPase Der from Acinetobacter baumannii (strain ACICU).